Reading from the N-terminus, the 103-residue chain is Large ribosomal subunit protein bL21 (103 aa).

It belongs to the bacterial ribosomal protein bL21 family. As to quaternary structure, part of the 50S ribosomal subunit. Contacts protein L20.

Its function is as follows. This protein binds to 23S rRNA in the presence of protein L20. This Ruthia magnifica subsp. Calyptogena magnifica protein is Large ribosomal subunit protein bL21.